A 75-amino-acid polypeptide reads, in one-letter code: Small ribosomal subunit protein bS18 (75 aa).

It belongs to the bacterial ribosomal protein bS18 family. Part of the 30S ribosomal subunit. Forms a tight heterodimer with protein bS6.

Binds as a heterodimer with protein bS6 to the central domain of the 16S rRNA, where it helps stabilize the platform of the 30S subunit. The protein is Small ribosomal subunit protein bS18 of Baumannia cicadellinicola subsp. Homalodisca coagulata.